The sequence spans 755 residues: Cartilage oligomeric matrix protein (755 aa).

The first 19 residues, 1-19, serve as a signal peptide directing secretion; it reads MSPTACVLVLALAALRATG. The tract at residues 21–84 is COMP N-terminal; the sequence is GQIPLGGDLA…PARTPGLSVR (64 aa). An EGF-like 1 domain is found at 85–124; the sequence is PVALCAPGSCFPGVVCTETATGARCGPCPPGYTGNGSHCT. Cystine bridges form between cysteine 89–cysteine 100, cysteine 94–cysteine 109, cysteine 112–cysteine 123, cysteine 129–cysteine 140, cysteine 134–cysteine 149, cysteine 152–cysteine 176, cysteine 182–cysteine 195, cysteine 189–cysteine 204, cysteine 207–cysteine 219, cysteine 227–cysteine 241, cysteine 235–cysteine 251, cysteine 253–cysteine 264, cysteine 280–cysteine 285, cysteine 290–cysteine 310, cysteine 326–cysteine 346, cysteine 349–cysteine 369, cysteine 385–cysteine 405, cysteine 408–cysteine 428, cysteine 446–cysteine 466, cysteine 482–cysteine 502, and cysteine 518–cysteine 739. Residue asparagine 119 is glycosylated (N-linked (GlcNAc...) asparagine). Residues 125 to 177 form the EGF-like 2; calcium-binding domain; the sequence is DVNECNAHPCFPRVRCINTSPGFHCEACPPGFSGPTHEGVGLTFAKTNKQVCT. Residues 178 to 220 enclose the EGF-like 3; calcium-binding domain; that stretch reads DINECETGQHNCVPNSVCVNTRGSFQCGPCQPGFVGDQRSGCQ. Residues 223-265 form the EGF-like 4 domain; it reads GQHFCPDGSPSPCHEKADCILERDGSRSCVCAVGWAGNGLLCG. 8 TSP type-3 repeats span residues 266–298, 299–334, 335–357, 358–393, 394–416, 417–454, 455–490, and 491–526; these read RDTDLDGFPDEKLRCSERQCRKDNCVTVPNSGQ, EDVDRDRIGDACDPDADGDGVPNEQDNCPLVRNPDQ, RNSDKDKWGDACDNCRSQKNDDQ, KDTDRDGQGDACDDDIDGDRIRNVADNCPRVPNFDQ, SDSDGDGVGDACDNCPQKDNPDQ, RDVDHDFVGDACDSDQDQDGDGHQDSRDNCPTVPNSAQ, QDSDHDGKGDACDDDDDNDGVPDSRDNCRLVPNPGQ, and EDNDRDGVGDACQGDFDADKVIDKIDVCPENAEVTL. Residues 295–501 are disordered; the sequence is NSGQEDVDRD…DNDRDGVGDA (207 aa). 2 stretches are compositionally biased toward basic and acidic residues: residues 332–344 and 350–365; these read PDQRNSDKDKWGD and RSQKNDDQKDTDRDGQ. Residue serine 394 is modified to Phosphoserine. Composition is skewed to basic and acidic residues over residues 412–424 and 456–465; these read DNPDQRDVDHDFV and DSDHDGKGDA. The mediates cell survival and induction of the IAP family of survival proteins stretch occupies residues 525 to 755; sequence TLTDFRAFQT…DYERHRLRRA (231 aa). A TSP C-terminal domain is found at 530 to 744; that stretch reads RAFQTVVLDP…LRYRCNDTIP (215 aa). The N-linked (GlcNAc...) asparagine glycan is linked to asparagine 740.

This sequence belongs to the thrombospondin family. As to quaternary structure, pentamer; disulfide-linked. Exists in a more compact conformation in the presence of calcium and shows a more extended conformation in the absence of calcium. Interacts with ITGB3, ITGA5 and FN1. Binding to FN1 requires the presence of divalent cations (Ca(2+), Mg(2+) or Mn(2+)). The greatest amount of binding is seen in the presence of Mn(2+). Interacts with MATN1, MATN3, MATN4 and ACAN. Binds heparin, heparan sulfate and chondroitin sulfate. EDTA dimishes significantly its binding to ACAN and abolishes its binding to MATN3, MATN4 and chondroitin sulfate. Interacts with collagen I, II and IX, and interaction with these collagens is dependent on the presence of zinc ions. Interacts with ADAMTS12. Interacts with ITGA7. Ca(2+) serves as cofactor. Proteolytically cleaved by metalloproteases ADAMTS4 and ADAMTS1 with ADAMTS4 showing more potent activity.

The protein resides in the secreted. Its subcellular location is the extracellular space. It is found in the extracellular matrix. Functionally, plays a role in the structural integrity of cartilage via its interaction with other extracellular matrix proteins such as the collagens and fibronectin. Can mediate the interaction of chondrocytes with the cartilage extracellular matrix through interaction with cell surface integrin receptors. Could play a role in the pathogenesis of osteoarthritis. Potent suppressor of apoptosis in both primary chondrocytes and transformed cells. Suppresses apoptosis by blocking the activation of caspase-3 and by inducing the IAP family of survival proteins (BIRC3, BIRC2, BIRC5 and XIAP). Essential for maintaining a vascular smooth muscle cells (VSMCs) contractile/differentiated phenotype under physiological and pathological stimuli. Maintains this phenotype of VSMCs by interacting with ITGA7. The polypeptide is Cartilage oligomeric matrix protein (Rattus norvegicus (Rat)).